The chain runs to 261 residues: MTHQTHAYHMVDPSPWPLTGALSALLMTSGLTMWFHYHSVTLLLLGLTTNILTMFQWWRDVVREGTFQGHHTPVVQESLRYGMILFITSEVLFFTGFFWAFYHSSLAPTPELGSYWPPVGVYPLNPLEVPLLNTSVLLASGVTITWAHHSLMEGNRKNMLQALLITILLGVYFTLLQMFEYYEASFTISDGIYGSTFFVTTGFHGLHVIIGSTFLLTCFIRQLKFHFTSNHHFGFEAAAWYWHFVDVVWLFLYLSIYWWGS.

Residues 1 to 15 are Mitochondrial matrix-facing; the sequence is MTHQTHAYHMVDPSP. Residues 16 to 34 form a helical membrane-spanning segment; that stretch reads WPLTGALSALLMTSGLTMW. Residues 35–40 are Mitochondrial intermembrane-facing; it reads FHYHSV. The chain crosses the membrane as a helical span at residues 41-66; that stretch reads TLLLLGLTTNILTMFQWWRDVVREGT. Residues 67–72 are Mitochondrial matrix-facing; sequence FQGHHT. The chain crosses the membrane as a helical span at residues 73–105; that stretch reads PVVQESLRYGMILFITSEVLFFTGFFWAFYHSS. The Mitochondrial intermembrane portion of the chain corresponds to 106-128; it reads LAPTPELGSYWPPVGVYPLNPLE. Residues 129 to 152 traverse the membrane as a helical segment; that stretch reads VPLLNTSVLLASGVTITWAHHSLM. Residues 153-155 lie on the Mitochondrial matrix side of the membrane; sequence EGN. A helical transmembrane segment spans residues 156 to 183; it reads RKNMLQALLITILLGVYFTLLQMFEYYE. At 184–190 the chain is on the mitochondrial intermembrane side; it reads ASFTISD. The helical transmembrane segment at 191 to 223 threads the bilayer; sequence GIYGSTFFVTTGFHGLHVIIGSTFLLTCFIRQL. The Mitochondrial matrix segment spans residues 224 to 232; it reads KFHFTSNHH. Residues 233-256 form a helical membrane-spanning segment; sequence FGFEAAAWYWHFVDVVWLFLYLSI. Topologically, residues 257 to 261 are mitochondrial intermembrane; sequence YWWGS.

This sequence belongs to the cytochrome c oxidase subunit 3 family. Component of the cytochrome c oxidase (complex IV, CIV), a multisubunit enzyme composed of 14 subunits. The complex is composed of a catalytic core of 3 subunits MT-CO1, MT-CO2 and MT-CO3, encoded in the mitochondrial DNA, and 11 supernumerary subunits COX4I, COX5A, COX5B, COX6A, COX6B, COX6C, COX7A, COX7B, COX7C, COX8 and NDUFA4, which are encoded in the nuclear genome. The complex exists as a monomer or a dimer and forms supercomplexes (SCs) in the inner mitochondrial membrane with NADH-ubiquinone oxidoreductase (complex I, CI) and ubiquinol-cytochrome c oxidoreductase (cytochrome b-c1 complex, complex III, CIII), resulting in different assemblies (supercomplex SCI(1)III(2)IV(1) and megacomplex MCI(2)III(2)IV(2)).

The protein resides in the mitochondrion inner membrane. The enzyme catalyses 4 Fe(II)-[cytochrome c] + O2 + 8 H(+)(in) = 4 Fe(III)-[cytochrome c] + 2 H2O + 4 H(+)(out). In terms of biological role, component of the cytochrome c oxidase, the last enzyme in the mitochondrial electron transport chain which drives oxidative phosphorylation. The respiratory chain contains 3 multisubunit complexes succinate dehydrogenase (complex II, CII), ubiquinol-cytochrome c oxidoreductase (cytochrome b-c1 complex, complex III, CIII) and cytochrome c oxidase (complex IV, CIV), that cooperate to transfer electrons derived from NADH and succinate to molecular oxygen, creating an electrochemical gradient over the inner membrane that drives transmembrane transport and the ATP synthase. Cytochrome c oxidase is the component of the respiratory chain that catalyzes the reduction of oxygen to water. Electrons originating from reduced cytochrome c in the intermembrane space (IMS) are transferred via the dinuclear copper A center (CU(A)) of subunit 2 and heme A of subunit 1 to the active site in subunit 1, a binuclear center (BNC) formed by heme A3 and copper B (CU(B)). The BNC reduces molecular oxygen to 2 water molecules using 4 electrons from cytochrome c in the IMS and 4 protons from the mitochondrial matrix. The sequence is that of Cytochrome c oxidase subunit 3 (MT-CO3) from Loxodonta africana (African elephant).